The sequence spans 568 residues: Glucose-6-phosphate isomerase, cytosolic 1 (568 aa).

The active-site Proton donor is the E360. Catalysis depends on residues H391 and K516.

It belongs to the GPI family. As to quaternary structure, homodimer.

The protein localises to the cytoplasm. The enzyme catalyses alpha-D-glucose 6-phosphate = beta-D-fructose 6-phosphate. Its pathway is carbohydrate degradation; glycolysis; D-glyceraldehyde 3-phosphate and glycerone phosphate from D-glucose: step 2/4. The sequence is that of Glucose-6-phosphate isomerase, cytosolic 1 (PGIC1) from Clarkia mildrediae.